The sequence spans 189 residues: MKLIIGLGNPGKEYSGNRHNVGFQCLSRFAKDNHISFDKKCCLSRTGSGRINDEEIVLAKPQTYMNLSGKAASQLLRRYNLKAADIIVVQDDLDLPAGKIRLRLGGSAGGHNGISSIITDIGTKEFIRLKIGIGKPDSRNNGTEVVDHVLGNFGGEEREIMDKAITRASEALTCLLTFGLDTASNRFNS.

TRNA is bound at residue Y14. H19 (proton acceptor) is an active-site residue. TRNA is bound by residues Y64, N66, and N112.

This sequence belongs to the PTH family. As to quaternary structure, monomer.

It is found in the cytoplasm. It carries out the reaction an N-acyl-L-alpha-aminoacyl-tRNA + H2O = an N-acyl-L-amino acid + a tRNA + H(+). Its function is as follows. Hydrolyzes ribosome-free peptidyl-tRNAs (with 1 or more amino acids incorporated), which drop off the ribosome during protein synthesis, or as a result of ribosome stalling. Catalyzes the release of premature peptidyl moieties from peptidyl-tRNA molecules trapped in stalled 50S ribosomal subunits, and thus maintains levels of free tRNAs and 50S ribosomes. This is Peptidyl-tRNA hydrolase from Dehalococcoides mccartyi (strain ATCC BAA-2266 / KCTC 15142 / 195) (Dehalococcoides ethenogenes (strain 195)).